A 104-amino-acid chain; its full sequence is Transcription elongation factor A protein-like 9 (104 aa).

The segment covering Met1 to Glu27 has biased composition (basic and acidic residues). Residues Met1–Thr44 are disordered.

The protein belongs to the TFS-II family. TFA subfamily.

The protein resides in the nucleus. Its function is as follows. May be involved in transcriptional regulation. This chain is Transcription elongation factor A protein-like 9, found in Homo sapiens (Human).